We begin with the raw amino-acid sequence, 206 residues long: Proteasome subunit beta 1 (206 aa).

A propeptide spans 1 to 14 (removed in mature form; by autocatalysis); the sequence is MSRIHNDPKVLLTG. Threonine 15 serves as the catalytic Nucleophile.

It belongs to the peptidase T1B family. In terms of assembly, the 20S proteasome core is composed of 14 alpha and 14 beta subunits that assemble into four stacked heptameric rings, resulting in a barrel-shaped structure. The two inner rings, each composed of seven catalytic beta subunits, are sandwiched by two outer rings, each composed of seven alpha subunits. The catalytic chamber with the active sites is on the inside of the barrel. Has a gated structure, the ends of the cylinder being occluded by the N-termini of the alpha-subunits. Is capped at one or both ends by the proteasome regulatory ATPase, PAN.

The protein resides in the cytoplasm. It catalyses the reaction Cleavage of peptide bonds with very broad specificity.. With respect to regulation, the formation of the proteasomal ATPase PAN-20S proteasome complex, via the docking of the C-termini of PAN into the intersubunit pockets in the alpha-rings, triggers opening of the gate for substrate entry. Interconversion between the open-gate and close-gate conformations leads to a dynamic regulation of the 20S proteasome proteolysis activity. In terms of biological role, component of the proteasome core, a large protease complex with broad specificity involved in protein degradation. In Caldivirga maquilingensis (strain ATCC 700844 / DSM 13496 / JCM 10307 / IC-167), this protein is Proteasome subunit beta 1.